A 227-amino-acid polypeptide reads, in one-letter code: Probable septum site-determining protein MinC (227 aa).

The protein belongs to the MinC family. Interacts with MinD and FtsZ.

Cell division inhibitor that blocks the formation of polar Z ring septums. Rapidly oscillates between the poles of the cell to destabilize FtsZ filaments that have formed before they mature into polar Z rings. Prevents FtsZ polymerization. This Geobacillus kaustophilus (strain HTA426) protein is Probable septum site-determining protein MinC.